The primary structure comprises 59 residues: Potassium channel toxin alpha-KTx 1.14 (59 aa).

The signal sequence occupies residues 1–22 (MKKISFLLLLAIVICSIGWTDG). Gln23 is modified (pyrrolidone carboxylic acid). Disulfide bonds link Cys29-Cys50, Cys35-Cys55, and Cys39-Cys57.

This sequence belongs to the short scorpion toxin superfamily. Potassium channel inhibitor family. Alpha-KTx 01 subfamily. In terms of tissue distribution, expressed by the venom gland.

It is found in the secreted. In terms of biological role, potent blocker of both large-conductance calcium-activated potassium channels (KCa1.1/KCNMA1) and voltage-gated potassium channels (Kv1.3/KCNA3 and ERG1/Kv11.1/KCNH2). This is Potassium channel toxin alpha-KTx 1.14 from Olivierus martensii (Manchurian scorpion).